The chain runs to 362 residues: Phosphoserine aminotransferase (362 aa).

R43 provides a ligand contact to L-glutamate. Pyridoxal 5'-phosphate-binding positions include 77–78 (AT), W103, T153, D173, and Q196. K197 bears the N6-(pyridoxal phosphate)lysine mark. A pyridoxal 5'-phosphate-binding site is contributed by 238 to 239 (NT).

This sequence belongs to the class-V pyridoxal-phosphate-dependent aminotransferase family. SerC subfamily. In terms of assembly, homodimer. Pyridoxal 5'-phosphate is required as a cofactor.

Its subcellular location is the cytoplasm. The catalysed reaction is O-phospho-L-serine + 2-oxoglutarate = 3-phosphooxypyruvate + L-glutamate. The enzyme catalyses 4-(phosphooxy)-L-threonine + 2-oxoglutarate = (R)-3-hydroxy-2-oxo-4-phosphooxybutanoate + L-glutamate. It functions in the pathway amino-acid biosynthesis; L-serine biosynthesis; L-serine from 3-phospho-D-glycerate: step 2/3. The protein operates within cofactor biosynthesis; pyridoxine 5'-phosphate biosynthesis; pyridoxine 5'-phosphate from D-erythrose 4-phosphate: step 3/5. In terms of biological role, catalyzes the reversible conversion of 3-phosphohydroxypyruvate to phosphoserine and of 3-hydroxy-2-oxo-4-phosphonooxybutanoate to phosphohydroxythreonine. This Xylella fastidiosa (strain 9a5c) protein is Phosphoserine aminotransferase.